A 300-amino-acid chain; its full sequence is Iron-dependent extradiol dioxygenase (300 aa).

2 consecutive VOC domains span residues 5 to 120 (SLGY…VFHG) and 142 to 270 (GMGH…FGCE). H145 contributes to the Fe cation binding site. Residues H200, H215, D250, and Y256 each coordinate substrate. H215 serves as a coordination point for Fe cation. E266 is a Fe cation binding site.

It belongs to the extradiol ring-cleavage dioxygenase family. In terms of assembly, homodimer, but may form a homooctamer. It depends on Fe(2+) as a cofactor.

It catalyses the reaction 3,4-dihydroxy-9,10-secoandrosta-1,3,5(10)-triene-9,17-dione + O2 = (1E,2Z)-3-hydroxy-5,9,17-trioxo-4,5:9,10-disecoandrosta-1(10),2-dien-4-oate + H(+). It participates in steroid metabolism; cholesterol metabolism. Catalyzes the meta-cleavage of 3,4-dihydroxy-9,10-seconandrost-1,3,5(10)-triene-9,17-dione (3,4-DHSA) to produce 4,5-9,10-diseco-3-hydroxy-5,9,17-trioxoandrosta-1(10),2-diene-4-oic acid (4,9-DSHA). This Mycobacterium tuberculosis (strain CDC 1551 / Oshkosh) protein is Iron-dependent extradiol dioxygenase (hsaC).